The sequence spans 478 residues: Ribosomal RNA small subunit methyltransferase F (478 aa).

S-adenosyl-L-methionine-binding positions include 123–129 (AAAPGSK), glutamate 147, aspartate 174, and aspartate 192. Cysteine 245 acts as the Nucleophile in catalysis.

This sequence belongs to the class I-like SAM-binding methyltransferase superfamily. RsmB/NOP family.

The protein resides in the cytoplasm. The catalysed reaction is cytidine(1407) in 16S rRNA + S-adenosyl-L-methionine = 5-methylcytidine(1407) in 16S rRNA + S-adenosyl-L-homocysteine + H(+). Specifically methylates the cytosine at position 1407 (m5C1407) of 16S rRNA. The polypeptide is Ribosomal RNA small subunit methyltransferase F (Vibrio parahaemolyticus serotype O3:K6 (strain RIMD 2210633)).